The sequence spans 281 residues: MNGERIIAFQGRPGAYSDLACRQARPGWTTLPCQTFAQTIAAVHDGRAELAMLACENSLAGRVPDIHALLPEAGLFIVGEHFQRVEHCLLGIPGSTLADARRIHTHPVAMAQVRGIITELGLDPVVEFDTAGAAEMVREWGRKEDVAVASALAAELNGLEILRRNVEDATHNTTRFYIASRRPATLPPPGPGFMTTLLFRVNNQPGALYKALGGLATAGVNMTRLESYMLEGSFSATQFLMDVEGHPEAPPLARALDELSFFSEQQEILGVYPASPFRRKP.

The Prephenate dehydratase domain occupies 6 to 181; it reads IIAFQGRPGA…NTTRFYIASR (176 aa). Positions 196-273 constitute an ACT domain; that stretch reads TLLFRVNNQP…EQQEILGVYP (78 aa). Residues alanine 207, leucine 208, asparagine 221, and methionine 222 each coordinate L-phenylalanine.

Homodimer.

The enzyme catalyses an N-acyl-L-homoserine lactone + H2O = L-homoserine lactone + a carboxylate. It carries out the reaction prephenate + H(+) = 3-phenylpyruvate + CO2 + H2O. Its pathway is amino-acid biosynthesis; L-phenylalanine biosynthesis; phenylpyruvate from prephenate: step 1/1. Its function is as follows. Multifunctional enzyme that acts on N-acyl-homoserine lactones (AHLs), beta-lactam antibiotics and shows prephenate dehydratase activity. Acts as an acylase on AHL and hydrolyzes the amide bond of the acyl side-chain of AHL molecules, releasing homoserine lactone (HSL) and the fatty acid. Can use different 3-oxo-acyl homoserine lactones, such as 3-oxo-decanoyl homoserine lactone, which is the preferred substrate, 3-oxo-octanoyl homoserine lactone, 3-oxo-hexanoyl homoserine lactone and 3-oxo-dodecanoyl homoserine lactone. It can also degrade various beta-lactam antibiotics, including penicillin G, amoxicillin and ampicillin, but not cefotaxime. In addition, it can complement a phenylalanine auxotrophic E.coli mutant, which carries a kanamycin gene inserted into pheA, suggesting that GqqA can also function as a prephenate dehydratase. Involved in bacterial quorum quenching (QQ) and cellulose biofilm formation. This Komagataeibacter europaeus (Gluconacetobacter europaeus) protein is Bifunctional N-acyl-homoserine lactone acylase/prephenate dehydratase.